A 267-amino-acid polypeptide reads, in one-letter code: Undecaprenyl-diphosphatase (267 aa).

7 helical membrane passes run 1–21 (MSLFHLILVALIQGITEFLPV), 40–60 (GQVIDVAVHVGTLGAVVLYFW), 85–105 (LAMGLIVATIPTVLAGAALHF), 111–131 (ALRSITVIGWTMLLFGLLLWW), 190–210 (MLMSIPTIIASGVLLGADVAV), 219–239 (DGAIAAAFAFVSALLALSLMM), and 245–265 (VSFTPYVIYRLALGLVLLGIA).

It belongs to the UppP family.

The protein localises to the cell inner membrane. The enzyme catalyses di-trans,octa-cis-undecaprenyl diphosphate + H2O = di-trans,octa-cis-undecaprenyl phosphate + phosphate + H(+). Catalyzes the dephosphorylation of undecaprenyl diphosphate (UPP). Confers resistance to bacitracin. This chain is Undecaprenyl-diphosphatase, found in Ruegeria pomeroyi (strain ATCC 700808 / DSM 15171 / DSS-3) (Silicibacter pomeroyi).